Reading from the N-terminus, the 317-residue chain is Ribosomal protein L11 methyltransferase (317 aa).

Residues T158, G179, D201, and N244 each coordinate S-adenosyl-L-methionine.

This sequence belongs to the methyltransferase superfamily. PrmA family.

The protein localises to the cytoplasm. It catalyses the reaction L-lysyl-[protein] + 3 S-adenosyl-L-methionine = N(6),N(6),N(6)-trimethyl-L-lysyl-[protein] + 3 S-adenosyl-L-homocysteine + 3 H(+). Its function is as follows. Methylates ribosomal protein L11. This chain is Ribosomal protein L11 methyltransferase, found in Streptococcus pyogenes serotype M6 (strain ATCC BAA-946 / MGAS10394).